Here is a 388-residue protein sequence, read N- to C-terminus: uncharacterized protein (388 aa).

The next 8 helical transmembrane spans lie at 15–37, 97–119, 129–151, 158–175, 179–196, 203–225, 304–326, and 347–369; these read VISA…LLVL, GFSK…VVFY, PIWG…TFLL, FIYI…FLSA, MMLA…VLFK, LAFW…YLSQ, IFIV…YIYF, and LLSV…DALL.

Its subcellular location is the cell membrane. This is an uncharacterized protein from Aquifex aeolicus (strain VF5).